The sequence spans 284 residues: Dihydropteroate synthase (284 aa).

The 260-residue stretch at 6–265 (VQVIGVLNVT…DVRASVDALK (260 aa)) folds into the Pterin-binding domain. Residue Asn-13 coordinates Mg(2+). Residues Thr-53, Asp-86, Asn-105, Asp-177, Lys-213, and 253-255 (RVH) contribute to the (7,8-dihydropterin-6-yl)methyl diphosphate site.

The protein belongs to the DHPS family. Homodimer. Requires Mg(2+) as cofactor.

The catalysed reaction is (7,8-dihydropterin-6-yl)methyl diphosphate + 4-aminobenzoate = 7,8-dihydropteroate + diphosphate. It functions in the pathway cofactor biosynthesis; tetrahydrofolate biosynthesis; 7,8-dihydrofolate from 2-amino-4-hydroxy-6-hydroxymethyl-7,8-dihydropteridine diphosphate and 4-aminobenzoate: step 1/2. Is potently inhibited by the sulfone dapsone and the two sulfonamides sulfamethoxazole and sulfamethoxypyridazine, with Kis in the range of 12 to 32 nM. To a lesser extent, is also inhibited by p-aminosalicylate (PAS). Functionally, catalyzes the condensation of para-aminobenzoate (pABA) with 6-hydroxymethyl-7,8-dihydropterin diphosphate (DHPt-PP) to form 7,8-dihydropteroate, the immediate precursor of folate derivatives. In Mycobacterium leprae (strain TN), this protein is Dihydropteroate synthase (folP1).